A 257-amino-acid chain; its full sequence is Leucine-rich repeat-containing protein 3 (257 aa).

Positions 1 to 32 are cleaved as a signal peptide; sequence MGTVRPPRPSLLLVSTRESCLFLLFCLHLGAA. Residues 33-64 form the LRRNT domain; that stretch reads CPQPCRCPDHAGAVAVFCSLRGLQEVPEDIPA. 4 LRR repeats span residues 65–86, 89–110, 114–135, and 136–157; these read NTVL…AFQH, RLRE…TFAG, GLRL…ALGK, and LSAK…QEAL. The helical transmembrane segment at 205-225 threads the bilayer; sequence VAMLVTMFGWFAMVIAYVVYY.

The protein belongs to the LRRC3 family. As to expression, widely expressed; detected in testis, lung, small intestine, breast, brain, heart, bone marrow, placenta, colon, fetal brain, liver, fetal liver, thymus, salivary gland, spinal cord, spleen, trachea and adrenal gland.

The protein resides in the membrane. In Homo sapiens (Human), this protein is Leucine-rich repeat-containing protein 3 (LRRC3).